We begin with the raw amino-acid sequence, 317 residues long: Malate dehydrogenase (317 aa).

Residues 10–15 (GGGQIG) and aspartate 34 each bind NAD(+). Arginine 83 and arginine 89 together coordinate substrate. NAD(+) contacts are provided by residues asparagine 96 and 119 to 121 (ISN). Positions 121 and 152 each coordinate substrate. Histidine 176 (proton acceptor) is an active-site residue.

This sequence belongs to the LDH/MDH superfamily. MDH type 3 family.

The enzyme catalyses (S)-malate + NAD(+) = oxaloacetate + NADH + H(+). In terms of biological role, catalyzes the reversible oxidation of malate to oxaloacetate. This is Malate dehydrogenase from Citrifermentans bemidjiense (strain ATCC BAA-1014 / DSM 16622 / JCM 12645 / Bem) (Geobacter bemidjiensis).